Reading from the N-terminus, the 547-residue chain is Methionine--tRNA ligase (547 aa).

The short motif at 13 to 23 (PYANGPLHIGH) is the 'HIGH' region element. Zn(2+) contacts are provided by C145, C148, C158, and C161. Residues 334 to 338 (QFSKS) carry the 'KMSKS' region motif. ATP is bound at residue K337.

This sequence belongs to the class-I aminoacyl-tRNA synthetase family. MetG type 1 subfamily. Requires Zn(2+) as cofactor.

It is found in the cytoplasm. The catalysed reaction is tRNA(Met) + L-methionine + ATP = L-methionyl-tRNA(Met) + AMP + diphosphate. Its function is as follows. Is required not only for elongation of protein synthesis but also for the initiation of all mRNA translation through initiator tRNA(fMet) aminoacylation. The chain is Methionine--tRNA ligase from Thermoplasma acidophilum (strain ATCC 25905 / DSM 1728 / JCM 9062 / NBRC 15155 / AMRC-C165).